A 623-amino-acid chain; its full sequence is MAU2 chromatid cohesion factor homolog (623 aa).

TPR repeat units follow at residues 96–129 (FDTA…SQNN), 451–484 (GGFY…ANAE), and 491–524 (SCSL…ASKI).

The protein belongs to the SCC4/mau-2 family. As to quaternary structure, interacts with Nipped-B to form the cohesin loading complex.

It is found in the nucleus. It localises to the nucleoplasm. Required for association of the cohesin complex with chromatin during interphase. Plays a role in sister chromatid cohesion and normal progression through prometaphase. This Drosophila grimshawi (Hawaiian fruit fly) protein is MAU2 chromatid cohesion factor homolog.